Here is a 401-residue protein sequence, read N- to C-terminus: Voltage-gated potassium channel subunit beta-1 (401 aa).

Residues Thr-90, Trp-91, Gln-97, and Asp-119 each coordinate NADP(+). The active-site Proton donor/acceptor is the Tyr-124. NADP(+)-binding residues include Asn-192, Ser-222, Arg-223, Gln-248, Trp-277, Ser-278, Pro-279, Leu-280, Ala-281, Cys-282, Lys-288, Arg-298, Gly-357, Ser-359, Gln-363, Glu-366, and Asn-367.

The protein belongs to the shaker potassium channel beta subunit family. In terms of assembly, homotetramer. Interaction with tetrameric potassium channel alpha subunits gives rise to a heterooctamer. Identified in potassium channel complexes containing KCNA1, KCNA2, KCNA4, KCNA5, KCNA6, KCNAB1 and KCNAB2. Part of a complex containing KCNA1, KCNA4 and LGI1; interaction with LGI1 inhibits down-regulation of KCNA1 channel activity. Interacts with the dimer formed by GNB1 and GNG2; this enhances KCNA1 binding. Interacts with SQSTM1.

It localises to the cytoplasm. Its subcellular location is the membrane. The protein localises to the cell membrane. It catalyses the reaction a primary alcohol + NADP(+) = an aldehyde + NADPH + H(+). The enzyme catalyses a secondary alcohol + NADP(+) = a ketone + NADPH + H(+). In terms of biological role, regulatory subunit of the voltage-gated potassium (Kv) channels composed of pore-forming and potassium-conducting alpha subunits and of regulatory beta subunits. The beta-1/KCNAB1 cytoplasmic subunit mediates closure of delayed rectifier potassium channels by physically obstructing the pore via its N-terminal domain and increases the speed of channel closure for other family members. Promotes the inactivation of KCNA1, KCNA2, KCNA4, KCNA5 and KCNA6 alpha subunit-containing channels. Displays nicotinamide adenine dinucleotide phosphate (NADPH)-dependent aldoketoreductase activity by catalyzing the NADPH-dependent reduction of a variety of endogenous aldehydes and ketones. The binding of NADPH is required for efficient down-regulation of potassium channel activity. Oxidation of the bound NADPH restrains N-terminal domain from blocking the channel, thereby decreasing N-type inactivation of potassium channel activity. This Bos taurus (Bovine) protein is Voltage-gated potassium channel subunit beta-1 (KCNAB1).